The chain runs to 358 residues: Stearoyl-CoA desaturase 2 (358 aa).

Residues 1 to 71 (MPAHILQEIS…EGPPPKLEYV (71 aa)) are Cytoplasmic-facing. The disordered stretch occupies residues 14–43 (SATTTITAPPSGGQQNGGEKFEKNPHHWGA). The segment covering 32 to 43 (EKFEKNPHHWGA) has biased composition (basic and acidic residues). Residues 72–92 (WRNIVLMALLHIGALYGITLV) form a helical membrane-spanning segment. Asn74 contacts substrate. Topologically, residues 93–96 (PSCK) are lumenal. A helical membrane pass occupies residues 97–117 (VYTCLFAYLYYVISALGITAG). Residues 118–216 (AHRLWSHRTY…EKLVMFQRRY (99 aa)) lie on the Cytoplasmic side of the membrane. Residues His119 and His124 each coordinate Fe cation. Positions 119 to 124 (HRLWSH) match the Histidine box-1 motif. The substrate site is built by Asn147, Arg154, and Asp155. Residues His156, His159, and His160 each contribute to the Fe cation site. A Histidine box-2 motif is present at residues 156–160 (HRAHH). Substrate is bound by residues Arg187 and Lys188. The helical transmembrane segment at 217-236 (YKPGLLLMCFILPTLVPWYC) threads the bilayer. Topologically, residues 237–240 (WGET) are lumenal. The helical transmembrane segment at 241–262 (FVNSLCVSTFLRYAVVLNATWL) threads the bilayer. Trp261 provides a ligand contact to substrate. The Cytoplasmic portion of the chain corresponds to 263–358 (VNSAAHLYGY…RTGEESCKSG (96 aa)). Fe cation is bound by residues His268, His297, His300, and His301. Residues 297-301 (HNYHH) carry the Histidine box-3 motif.

The protein belongs to the fatty acid desaturase type 1 family. The cofactor is Fe(2+). As to expression, detected in brain and adipose tissue, and at much lower levels in testis. Detected in liver when rats are kept on a fat-free diet, but not when their food contains unsaturated fatty acids.

The protein resides in the endoplasmic reticulum membrane. It is found in the microsome membrane. It carries out the reaction octadecanoyl-CoA + 2 Fe(II)-[cytochrome b5] + O2 + 2 H(+) = (9Z)-octadecenoyl-CoA + 2 Fe(III)-[cytochrome b5] + 2 H2O. It catalyses the reaction hexadecanoyl-CoA + 2 Fe(II)-[cytochrome b5] + O2 + 2 H(+) = (9Z)-hexadecenoyl-CoA + 2 Fe(III)-[cytochrome b5] + 2 H2O. Functionally, stearoyl-CoA desaturase that utilizes O(2) and electrons from reduced cytochrome b5 to introduce the first double bond into saturated fatty acyl-CoA substrates. Catalyzes the insertion of a cis double bond at the delta-9 position into fatty acyl-CoA substrates including palmitoyl-CoA and stearoyl-CoA. Gives rise to a mixture of 16:1 and 18:1 unsaturated fatty acids. Contributes to the biosynthesis of membrane phospholipids, cholesterol esters and triglycerides, especially during embryonic development and in neonates. Important for normal permeability barrier function of the skin in neonates. The polypeptide is Stearoyl-CoA desaturase 2 (Scd2) (Rattus norvegicus (Rat)).